A 297-amino-acid polypeptide reads, in one-letter code: Inactive beta selinene synthase (297 aa).

The protein belongs to the terpene synthase family. Monomer.

Its subcellular location is the cytoplasm. Functionally, inactive selinene synthase. This Zea mays (Maize) protein is Inactive beta selinene synthase.